The following is a 645-amino-acid chain: MAMDEYLWMVILGFIIAFILAFSVGANDVANSFGTAVGSGVVTLRQACILASIFETTGSVLLGAKVGETIRKGIIDVNLYNNTVETLMAGEVSAMVGSAVWQLIASFLRFPISGTHCIVGATIGFSLVAIGTQGVQWMELVKIVASWFISPLLSGFMSGVLFVLIRMFILKKEDPVPNGLRALPVFYAATIAINVFSIMYTGAPVMGLVLPMWAIALISFGVALLFALFVWLFVCPWMRRKITGKLQKECALSRASDESLNKIQEVESPVFKELPGAKAHDDSTVPLTGSAADPSGTSESMSGGHHPRAPYGRALSMTHGTTKSPVSNGTFGFDGTARADGHVYHTVHKDSGLYKDLLHRIRDERPADGAPRQLRRNNSYTCYTAAICGLPGLATRRGDTPAPEDSEKLVADAVAYSRRRLRYDSYSSYCNAVAEAEIEAEEGGVEVRLAPPLAEPEPPRDDPADEEKEEKDSPEVHLLFHFLQVLTACFGSFAHGGNDVSNAIGPLVALWLIYEQGAVLQEAATPVWLLFYGGVGICTGLWVWGRRVIQTMGKDLTPITPSSGFTIELASAFTVVIASNIGLPVSTTHCKVGSVVAVGWIRSRKAVDWRLFRNIFVAWFVTVPVAGLFSAAIMALLIHGILPFV.

The Extracellular segment spans residues 1–5; that stretch reads MAMDE. Residues 6–26 form a helical membrane-spanning segment; the sequence is YLWMVILGFIIAFILAFSVGA. Topologically, residues 27 to 46 are cytoplasmic; sequence NDVANSFGTAVGSGVVTLRQ. Residues 47–67 traverse the membrane as a helical segment; that stretch reads ACILASIFETTGSVLLGAKVG. At 68 to 86 the chain is on the extracellular side; the sequence is ETIRKGIIDVNLYNNTVET. An N-linked (GlcNAc...) asparagine glycan is attached at asparagine 81. A helical membrane pass occupies residues 87 to 107; that stretch reads LMAGEVSAMVGSAVWQLIASF. Over 108 to 109 the chain is Cytoplasmic; sequence LR. The chain crosses the membrane as a helical span at residues 110–130; sequence FPISGTHCIVGATIGFSLVAI. Over 131–142 the chain is Extracellular; it reads GTQGVQWMELVK. Residues 143–163 form a helical membrane-spanning segment; that stretch reads IVASWFISPLLSGFMSGVLFV. The Cytoplasmic segment spans residues 164–190; that stretch reads LIRMFILKKEDPVPNGLRALPVFYAAT. A helical transmembrane segment spans residues 191 to 211; it reads IAINVFSIMYTGAPVMGLVLP. The Extracellular segment spans residues 212–213; it reads MW. The chain crosses the membrane as a helical span at residues 214–234; sequence AIALISFGVALLFALFVWLFV. Residues 235–475 are Cytoplasmic-facing; that stretch reads CPWMRRKITG…EEKEEKDSPE (241 aa). Phosphoserine occurs at positions 253, 256, 259, 268, 316, and 379. Positions 275–320 are disordered; sequence PGAKAHDDSTVPLTGSAADPSGTSESMSGGHHPRAPYGRALSMTHG. The segment at 448–471 is disordered; the sequence is RLAPPLAEPEPPRDDPADEEKEEK. A helical membrane pass occupies residues 476 to 496; sequence VHLLFHFLQVLTACFGSFAHG. Topologically, residues 497–523 are extracellular; sequence GNDVSNAIGPLVALWLIYEQGAVLQEA. A helical membrane pass occupies residues 524-544; that stretch reads ATPVWLLFYGGVGICTGLWVW. At 545–564 the chain is on the cytoplasmic side; it reads GRRVIQTMGKDLTPITPSSG. The helical transmembrane segment at 565–579 threads the bilayer; that stretch reads FTIELASAFTVVIAS. At 580 to 586 the chain is on the extracellular side; that stretch reads NIGLPVS. Residues 587–602 form a helical membrane-spanning segment; sequence TTHCKVGSVVAVGWIR. The Cytoplasmic segment spans residues 603–614; the sequence is SRKAVDWRLFRN. The chain crosses the membrane as a helical span at residues 615–635; it reads IFVAWFVTVPVAGLFSAAIMA. Over 636-645 the chain is Extracellular; the sequence is LLIHGILPFV.

The protein belongs to the inorganic phosphate transporter (PiT) (TC 2.A.20) family. Homodimer.

The protein localises to the cell membrane. It is found in the apical cell membrane. The catalysed reaction is 2 Na(+)(out) + phosphate(out) = 2 Na(+)(in) + phosphate(in). Its function is as follows. Sodium-phosphate symporter which preferentially transports the monovalent form of phosphate with a stoichiometry of two sodium ions per phosphate ion. Plays a critical role in the determination of bone quality and strength by providing phosphate for bone mineralization. Required to maintain normal cerebrospinal fluid phosphate levels. Mediates phosphate-induced calcification of vascular smooth muscle cells (VCMCs) and can functionally compensate for loss of SLC20A1 in VCMCs. The polypeptide is Sodium-dependent phosphate transporter 2 (SLC20A2) (Bos taurus (Bovine)).